The sequence spans 471 residues: Secretogranin-3 (471 aa).

Positions 1-22 (MGFLWTGTWIVVLMLHSSPIQA) are cleaved as a signal peptide. Disordered regions lie at residues 23–72 (FPKP…ESNY) and 86–105 (EKEK…NDNK). Basic and acidic residues predominate over residues 32–45 (KPLHNRELSAERPL). Ser40 is modified (phosphoserine). Ser40 carries an O-linked (Xyl...) (chondroitin sulfate) serine glycan. A glycan (N-linked (GlcNAc...) asparagine) is linked at Asn71. Residues 86 to 96 (EKEKNEKERQS) are compositionally biased toward basic and acidic residues. An N-linked (GlcNAc...) asparagine glycan is attached at Asn353. A disordered region spans residues 357–409 (LFAVPSEKSHEETDSTKEEAAKMEKEYGTLKDSTKDDDSNPRGKTDEHKGKTE). A compositionally biased stretch (basic and acidic residues) spans 363 to 409 (EKSHEETDSTKEEAAKMEKEYGTLKDSTKDDDSNPRGKTDEHKGKTE). Ser365 carries the post-translational modification Phosphoserine.

As to quaternary structure, interacts with CHGA. Interacts with secretogranin II/SCG2. Interacts (via C-terminus) with CPE.

It is found in the cytoplasmic vesicle. Its subcellular location is the secretory vesicle. The protein resides in the secretory vesicle membrane. The protein localises to the secreted. Functionally, member of the granin protein family that regulates the biogenesis of secretory granules. Acts as a sorting receptor for intragranular proteins including chromogranin A/CHGA. May also play a role in angiogenesis. Promotes endothelial proliferation, migration and tube formation through MEK/ERK signaling pathway. In Bos taurus (Bovine), this protein is Secretogranin-3 (SCG3).